The primary structure comprises 47 residues: Large ribosomal subunit protein eL40 (47 aa).

The protein belongs to the eukaryotic ribosomal protein eL40 family.

This is Large ribosomal subunit protein eL40 from Halobacterium salinarum (strain ATCC 29341 / DSM 671 / R1).